The following is a 379-amino-acid chain: NuA4 complex subunit EAF3 homolog (379 aa).

Residues 6 to 61 (EENEKVLVHHQNRIYEAKIIKVDPKTSKSDKKKPLYFIHYLGWKEKWNEWIEPNKI) form the Tudor-knot domain. Residues 75 to 212 (TNIKASTTSL…KRNDSKSSHF (138 aa)) are disordered. Residues 78 to 87 (KASTTSLNNK) show a composition bias toward low complexity. A compositionally biased stretch (acidic residues) spans 111–141 (ENSDEDENESELEDGGGEDADEGGEDIEDQE). The span at 165 to 199 (SSSSSSSSKSNNNNNNNNNNNNNNNNNNNNNNNNN) shows a compositional bias: low complexity. Positions 214 to 377 (STKFIDIEIP…ASSPYLKAAS (164 aa)) constitute an MRG domain.

Component of the NuA4 histone acetyltransferase complex.

It is found in the nucleus. Functionally, component of the NuA4 histone acetyltransferase complex which is involved in transcriptional activation of selected genes principally by acetylation of nucleosomal histone H4 and H2A. The NuA4 complex is also involved in DNA repair. Also a component of a complex which acts to repress transcription by deacetylation of nucleosomal histones. This Dictyostelium discoideum (Social amoeba) protein is NuA4 complex subunit EAF3 homolog.